The primary structure comprises 138 residues: Acidic phospholipase A2 VpaPLA2 (138 aa).

Positions 1 to 16 (MRTLWIVAVCLMGVEG) are cleaved as a signal peptide. Cystine bridges form between Cys-42-Cys-131, Cys-44-Cys-60, Cys-59-Cys-111, Cys-65-Cys-138, Cys-66-Cys-104, Cys-73-Cys-97, and Cys-91-Cys-102. Positions 43, 45, and 47 each coordinate Ca(2+). The active site involves His-63. Asp-64 is a Ca(2+) binding site. Asp-105 is an active-site residue.

The protein belongs to the phospholipase A2 family. Group II subfamily. D49 sub-subfamily. The cofactor is Ca(2+). As to expression, expressed by the venom gland.

The protein resides in the secreted. It carries out the reaction a 1,2-diacyl-sn-glycero-3-phosphocholine + H2O = a 1-acyl-sn-glycero-3-phosphocholine + a fatty acid + H(+). Snake venom phospholipase A2 (PLA2) that causes a sudden decrease of arterial blood pressure when injected into rat, but is not lethal. When co-injected with an uncharacterized basic protein (which did not show any enzymatic activity, but also causes a drop in blood pressure), this synergistical mixture is lethal. PLA2 catalyzes the calcium-dependent hydrolysis of the 2-acyl groups in 3-sn-phosphoglycerides. This Daboia palaestinae (Palestine viper) protein is Acidic phospholipase A2 VpaPLA2.